Here is a 490-residue protein sequence, read N- to C-terminus: Katanin p60 ATPase-containing subunit A-like 1 (490 aa).

Methionine 1 carries the post-translational modification N-acetylmethionine. Residues 95-184 form a disordered region; it reads DPAVWPPPVP…DGEMPKFDGA (90 aa). Residues 116–127 show a composition bias toward basic and acidic residues; that stretch reads PNREVRPLRKEM. A compositionally biased stretch (low complexity) spans 128–139; that stretch reads AGVGARGPVGRA. The span at 143–169 shows a compositional bias: basic and acidic residues; the sequence is SKSEKPSTSRDKDYRARGRDDKGRKNM. A Phosphoserine modification is found at serine 174. 248–255 contacts ATP; the sequence is GPPGTGKT.

Belongs to the AAA ATPase family. Katanin p60 subunit A1 subfamily. A-like 1 sub-subfamily. In terms of assembly, interacts with KATNB1 and KATNBL1. As to expression, expressed in testis, restricted to Sertoli cells (at protein level).

The protein localises to the cytoplasm. It is found in the cytoskeleton. The protein resides in the spindle pole. Its subcellular location is the spindle. The catalysed reaction is n ATP + n H2O + a microtubule = n ADP + n phosphate + (n+1) alpha/beta tubulin heterodimers.. Its function is as follows. Regulates microtubule dynamics in Sertoli cells, a process that is essential for spermiogenesis and male fertility. Severs microtubules in an ATP-dependent manner, promoting rapid reorganization of cellular microtubule arrays. Has microtubule-severing activity in vitro. The chain is Katanin p60 ATPase-containing subunit A-like 1 from Homo sapiens (Human).